The following is a 284-amino-acid chain: 1D-myo-inositol 2-acetamido-2-deoxy-alpha-D-glucopyranoside deacetylase (284 aa).

Zn(2+) contacts are provided by His-12, Asp-15, and His-146.

Belongs to the MshB deacetylase family. Zn(2+) is required as a cofactor.

It carries out the reaction 1D-myo-inositol 2-acetamido-2-deoxy-alpha-D-glucopyranoside + H2O = 1D-myo-inositol 2-amino-2-deoxy-alpha-D-glucopyranoside + acetate. Functionally, catalyzes the deacetylation of 1D-myo-inositol 2-acetamido-2-deoxy-alpha-D-glucopyranoside (GlcNAc-Ins) in the mycothiol biosynthesis pathway. The protein is 1D-myo-inositol 2-acetamido-2-deoxy-alpha-D-glucopyranoside deacetylase of Mycolicibacterium gilvum (strain PYR-GCK) (Mycobacterium gilvum (strain PYR-GCK)).